The sequence spans 476 residues: Protein transport protein Sec61 subunit alpha (476 aa).

Residues 2-33 are Cytoplasmic-facing; that stretch reads GIKFLEFIKPFCAVLPEIQKPERKIQFREKVL. Residues 34 to 53 form a helical membrane-spanning segment; that stretch reads WTAITLFIFLVCCQIPLFGI. At 54–76 the chain is on the lumenal side; sequence MSSDSADPFYWMRVILASNRGTL. Residues 77–96 form a helical membrane-spanning segment; it reads MELGISPIVTSGLIMQLLAG. Topologically, residues 97 to 117 are cytoplasmic; that stretch reads AKIIEVGDTPKDRALFNGAQK. The helical transmembrane segment at 118-138 threads the bilayer; it reads LFGMIITIGQAIVYVMTGMYG. Topologically, residues 139-144 are lumenal; that stretch reads DPSEMG. Residues 145 to 165 form a helical membrane-spanning segment; sequence AGICLLIIIQLFVAGLIVLLL. The Cytoplasmic portion of the chain corresponds to 166 to 172; it reads DELLQKG. The helical transmembrane segment at 173–193 threads the bilayer; that stretch reads YGLGSGISLFIATNICETIVW. The Lumenal segment spans residues 194–240; that stretch reads KAFSPTTVNTGRGTEFEGAIIALFHLLATRTDKVRALREAFYRQNLP. The chain crosses the membrane as a helical span at residues 241–261; that stretch reads NILNLIATVFVFAVVIYFQGF. Topologically, residues 262–288 are cytoplasmic; that stretch reads RVDLPIKSARYRGQYNTYPIKLFYTSN. Residues 289 to 309 traverse the membrane as a helical segment; that stretch reads IPIILQSALVSNLYVISQMLS. At 310-354 the chain is on the lumenal side; the sequence is TRFSGNFLVNLLGTWSDATSGGPARAYPVAGLCYYLSPPESFGSV. The chain crosses the membrane as a helical span at residues 355–375; that stretch reads LDDPVHAAIYIVFMLGSCAFF. Residues 376–420 lie on the Cytoplasmic side of the membrane; the sequence is SKTWIEVSGSSAKDVAKQLKEQQMVMRGHRETSMVHELNRYIPTA. The chain crosses the membrane as a helical span at residues 421 to 441; the sequence is AAFGGLCIGGLSVMADFLGAI. Over 442–445 the chain is Lumenal; that stretch reads GSGT. Residues 446–462 form a helical membrane-spanning segment; the sequence is GILLAVTIIYQYFEIFV. At 463–476 the chain is on the cytoplasmic side; the sequence is KEQSEMGSMGALLF.

It belongs to the SecY/SEC61-alpha family. As to quaternary structure, the SEC61 channel-forming translocon complex consists of channel-forming core components SEC61A1, SEC61B and SEC61G and different auxiliary components such as SEC62 and SEC63. The SEC61 channel associates with the multi-pass translocon (MPT) complex.

The protein localises to the endoplasmic reticulum membrane. In terms of biological role, component of SEC61 channel-forming translocon complex that mediates transport of signal peptide-containing precursor polypeptides across the endoplasmic reticulum (ER). Forms a ribosome receptor and a gated pore in the ER membrane, both functions required for cotranslational translocation of nascent polypeptides. May cooperate with auxiliary protein SEC62, SEC63 and HSPA5/BiP to enable post-translational transport of small presecretory proteins. The SEC61 channel is also involved in ER membrane insertion of transmembrane proteins: it mediates membrane insertion of the first few transmembrane segments of proteins, while insertion of subsequent transmembrane regions of multi-pass membrane proteins is mediated by the multi-pass translocon (MPT) complex. This Notothenia angustata (Rockcod) protein is Protein transport protein Sec61 subunit alpha (sec61a).